The primary structure comprises 182 residues: Large ribosomal subunit protein uL5 (182 aa).

This sequence belongs to the universal ribosomal protein uL5 family. As to quaternary structure, part of the 50S ribosomal subunit; part of the 5S rRNA/L5/L18/L25 subcomplex. Contacts the 5S rRNA and the P site tRNA. Forms a bridge to the 30S subunit in the 70S ribosome.

Functionally, this is one of the proteins that bind and probably mediate the attachment of the 5S RNA into the large ribosomal subunit, where it forms part of the central protuberance. In the 70S ribosome it contacts protein S13 of the 30S subunit (bridge B1b), connecting the 2 subunits; this bridge is implicated in subunit movement. Contacts the P site tRNA; the 5S rRNA and some of its associated proteins might help stabilize positioning of ribosome-bound tRNAs. The sequence is that of Large ribosomal subunit protein uL5 from Coxiella burnetii (strain CbuG_Q212) (Coxiella burnetii (strain Q212)).